A 338-amino-acid polypeptide reads, in one-letter code: tRNA-specific 2-thiouridylase MnmA (338 aa).

Residues 6 to 13 (AMSGGVDS) and Met32 contribute to the ATP site. The active-site Nucleophile is Cys92. Cys92 and Cys186 are oxidised to a cystine. Gly116 is a binding site for ATP. The segment at 134–136 (KDQ) is interaction with tRNA. Catalysis depends on Cys186, which acts as the Cysteine persulfide intermediate. Residues 288-289 (RY) form an interaction with tRNA region.

Belongs to the MnmA/TRMU family.

It is found in the cytoplasm. It catalyses the reaction S-sulfanyl-L-cysteinyl-[protein] + uridine(34) in tRNA + AH2 + ATP = 2-thiouridine(34) in tRNA + L-cysteinyl-[protein] + A + AMP + diphosphate + H(+). Its function is as follows. Catalyzes the 2-thiolation of uridine at the wobble position (U34) of tRNA, leading to the formation of s(2)U34. The chain is tRNA-specific 2-thiouridylase MnmA from Campylobacter jejuni subsp. jejuni serotype O:2 (strain ATCC 700819 / NCTC 11168).